A 397-amino-acid polypeptide reads, in one-letter code: CCA-adding enzyme (397 aa).

Gly32 and Arg35 together coordinate ATP. CTP contacts are provided by Gly32 and Arg35. The Mg(2+) site is built by Asp45 and Asp47. Arg116, Asp159, Arg162, Arg165, and Arg168 together coordinate ATP. CTP-binding residues include Arg116, Asp159, Arg162, Arg165, and Arg168.

Belongs to the tRNA nucleotidyltransferase/poly(A) polymerase family. Bacterial CCA-adding enzyme type 3 subfamily. As to quaternary structure, homodimer. The cofactor is Mg(2+).

The catalysed reaction is a tRNA precursor + 2 CTP + ATP = a tRNA with a 3' CCA end + 3 diphosphate. It carries out the reaction a tRNA with a 3' CCA end + 2 CTP + ATP = a tRNA with a 3' CCACCA end + 3 diphosphate. Catalyzes the addition and repair of the essential 3'-terminal CCA sequence in tRNAs without using a nucleic acid template. Adds these three nucleotides in the order of C, C, and A to the tRNA nucleotide-73, using CTP and ATP as substrates and producing inorganic pyrophosphate. tRNA 3'-terminal CCA addition is required both for tRNA processing and repair. Also involved in tRNA surveillance by mediating tandem CCA addition to generate a CCACCA at the 3' terminus of unstable tRNAs. While stable tRNAs receive only 3'-terminal CCA, unstable tRNAs are marked with CCACCA and rapidly degraded. In Levilactobacillus brevis (strain ATCC 367 / BCRC 12310 / CIP 105137 / JCM 1170 / LMG 11437 / NCIMB 947 / NCTC 947) (Lactobacillus brevis), this protein is CCA-adding enzyme.